The chain runs to 644 residues: Exoribonuclease 2 (644 aa).

The RNB domain occupies Arg-189 to Lys-516. The S1 motif domain occupies Asn-561 to Ala-643.

Belongs to the RNR ribonuclease family. RNase II subfamily.

It localises to the cytoplasm. The catalysed reaction is Exonucleolytic cleavage in the 3'- to 5'-direction to yield nucleoside 5'-phosphates.. Involved in mRNA degradation. Hydrolyzes single-stranded polyribonucleotides processively in the 3' to 5' direction. This is Exoribonuclease 2 from Salmonella dublin (strain CT_02021853).